Here is a 1225-residue protein sequence, read N- to C-terminus: MVDVNRFKSMQITLASPSKVRSWSYGEVKKPETINYRTLKPEREGLFDEVIFGPTKDWECACGKYKRIRYRGIVCDRCGVEVTRTKVRRERMGHIELKAPVSHIWYFKGIPSRMGLTLDMSPRALEEVIYFAAYVVIDPKDTPLEHKSIMTEREYRERLREYGYGSFVAKMGAEAIQDLLKQVDLEKEIAELKEELKTATGQKRVKAIRRLDVLDAFYKSGNKPEWMILNILPVIPPDLRPMLQLDGGRFASSDLNDLYRRVINRNNRLARLLELNAPGIIVQNEKRMLQEAVDALIDNGRRGRPITGPGSRPLKSLSHMLKGKQGRFRQNLLGKRVDFSGRSVIAVGPTLKMYQCGVPREMAIELFKPFVMREIVARDIVQNVKAAKRLVERGDERIWDILEEVIKEHPVLLNRAPTLHRLGIQAFEPVLIDGKALRLHPLVCEAYNADFDGDQMAIHVPLSEEAQAEARILMLAAEHILNPKDGKPVVTPSQDMVLGNYYLTMEEAGREGEGMVFKDRDEAVMAYRNGYVHLHSRVGIATDSLNKPWTEEQRHKVLLTTVGKILFNDIMPEGLPYLQEPNNANLTEGVPAKYFLPLGGDIKEAISNLELNPPFKKKNLGNIIAEIFKRFRTTETSALLDRMKNLGYHHSTLAGLTVGIADIPVVDDKTEIIEESHKRVEQITKQFRRGMITDDERYNAVTAEWRAAREKLEKRLIANQDPKNPIVMMMDSGARGNISNFSQLAGMRGLMAAPNGRIMELPILSNFREGLSVLEMFFSTHGARKGMTDTALKTADSGYLTRRLVDVAQDVIIREDDCGTDRGLLIRSIAEGKEMIESLEERLNGRYTKKTVKHPETGAVIIGPNELITEDKAREIVNAGVEEVTIRSVFTCNTRHGVCRHCYGINLATGDAVEVGEAVGTIAAQSIGEPGTQLTMRTFHTGGVASNTDITQGLPRVQEIFEARNPKGEAVITEVKGQVTAIEEDASTRTKKVFVKGETGEGEYVVPFTARMRVEVGGQVARGAALTEGSIQPKRLLAVRDVLSVETYLLGEVQKVYRSQGVEIGDKHIEVMVRQMIRKVRVMDPGDTDLLMGTLMDINDFTDANKDVLIAGGVPATGRPVLMGITKASLETNSFLSAASFQETTRVLTDAAIRGKKDHLLGLKENVIIGKIIPAGTGMARYRNLEPHAVNEEEYLNPTVEEEGNEETTEVVVDTAVETVEETVE.

The Zn(2+) site is built by Cys60, Cys62, Cys75, and Cys78. 3 residues coordinate Mg(2+): Asp450, Asp452, and Asp454. Residues Cys818, Cys892, Cys899, and Cys902 each contribute to the Zn(2+) site.

The protein belongs to the RNA polymerase beta' chain family. The RNAP catalytic core consists of 2 alpha, 1 beta, 1 beta' and 1 omega subunit. When a sigma factor is associated with the core the holoenzyme is formed, which can initiate transcription. The cofactor is Mg(2+). It depends on Zn(2+) as a cofactor.

It catalyses the reaction RNA(n) + a ribonucleoside 5'-triphosphate = RNA(n+1) + diphosphate. In terms of biological role, DNA-dependent RNA polymerase catalyzes the transcription of DNA into RNA using the four ribonucleoside triphosphates as substrates. This chain is DNA-directed RNA polymerase subunit beta', found in Streptococcus pneumoniae serotype 19F (strain G54).